The primary structure comprises 71 residues: Large ribosomal subunit protein bL31 (71 aa).

Residues Cys-16, Cys-18, Cys-36, and Cys-39 each coordinate Zn(2+).

The protein belongs to the bacterial ribosomal protein bL31 family. Type A subfamily. As to quaternary structure, part of the 50S ribosomal subunit. Zn(2+) serves as cofactor.

In terms of biological role, binds the 23S rRNA. In Petrotoga mobilis (strain DSM 10674 / SJ95), this protein is Large ribosomal subunit protein bL31.